A 671-amino-acid polypeptide reads, in one-letter code: DNA ligase (671 aa).

NAD(+) contacts are provided by residues 32-36 (DAEYD), 81-82 (SL), and E113. K115 functions as the N6-AMP-lysine intermediate in the catalytic mechanism. Positions 136, 173, 290, and 314 each coordinate NAD(+). 4 residues coordinate Zn(2+): C408, C411, C426, and C432. In terms of domain architecture, BRCT spans 593–671 (EIDSPFAGKT…EAEMIRLLGA (79 aa)).

It belongs to the NAD-dependent DNA ligase family. LigA subfamily. Mg(2+) is required as a cofactor. Mn(2+) serves as cofactor.

It catalyses the reaction NAD(+) + (deoxyribonucleotide)n-3'-hydroxyl + 5'-phospho-(deoxyribonucleotide)m = (deoxyribonucleotide)n+m + AMP + beta-nicotinamide D-nucleotide.. Its function is as follows. DNA ligase that catalyzes the formation of phosphodiester linkages between 5'-phosphoryl and 3'-hydroxyl groups in double-stranded DNA using NAD as a coenzyme and as the energy source for the reaction. It is essential for DNA replication and repair of damaged DNA. The chain is DNA ligase from Salmonella paratyphi C (strain RKS4594).